Consider the following 420-residue polypeptide: Histidine--tRNA ligase (420 aa).

This sequence belongs to the class-II aminoacyl-tRNA synthetase family. Homodimer.

It localises to the cytoplasm. It catalyses the reaction tRNA(His) + L-histidine + ATP = L-histidyl-tRNA(His) + AMP + diphosphate + H(+). The protein is Histidine--tRNA ligase (hisS) of Mycoplasmopsis pulmonis (strain UAB CTIP) (Mycoplasma pulmonis).